Here is a 235-residue protein sequence, read N- to C-terminus: 2-C-methyl-D-erythritol 4-phosphate cytidylyltransferase (235 aa).

Belongs to the IspD/TarI cytidylyltransferase family. IspD subfamily.

It catalyses the reaction 2-C-methyl-D-erythritol 4-phosphate + CTP + H(+) = 4-CDP-2-C-methyl-D-erythritol + diphosphate. It functions in the pathway isoprenoid biosynthesis; isopentenyl diphosphate biosynthesis via DXP pathway; isopentenyl diphosphate from 1-deoxy-D-xylulose 5-phosphate: step 2/6. In terms of biological role, catalyzes the formation of 4-diphosphocytidyl-2-C-methyl-D-erythritol from CTP and 2-C-methyl-D-erythritol 4-phosphate (MEP). This Pseudomonas putida (strain ATCC 700007 / DSM 6899 / JCM 31910 / BCRC 17059 / LMG 24140 / F1) protein is 2-C-methyl-D-erythritol 4-phosphate cytidylyltransferase.